A 279-amino-acid chain; its full sequence is Urease accessory protein UreD (279 aa).

It belongs to the UreD family. UreD, UreF and UreG form a complex that acts as a GTP-hydrolysis-dependent molecular chaperone, activating the urease apoprotein by helping to assemble the nickel containing metallocenter of UreC. The UreE protein probably delivers the nickel.

The protein localises to the cytoplasm. Functionally, required for maturation of urease via the functional incorporation of the urease nickel metallocenter. The polypeptide is Urease accessory protein UreD (Streptococcus salivarius (strain 57.I)).